We begin with the raw amino-acid sequence, 534 residues long: Apolipoprotein N-acyltransferase (534 aa).

Helical transmembrane passes span 18–38, 39–59, 74–94, 105–125, 127–147, 178–198, and 209–229; these read LLAI…GFFA, AMFL…ASPD, WLFG…ALLV, LAIL…VALA, IFWS…GLME, VIGA…PALA, and ALAV…LYVA. The CN hydrolase domain maps to 246–496; that stretch reads VQPDIDQAAK…TGFIDATVDR (251 aa). The Proton acceptor role is filled by Glu291. Residue Lys355 is part of the active site. Cys408 serves as the catalytic Nucleophile. A helical membrane pass occupies residues 504–524; it reads TFPRQTYFWLTEALLILIALV.

This sequence belongs to the CN hydrolase family. Apolipoprotein N-acyltransferase subfamily.

The protein resides in the cell inner membrane. It catalyses the reaction N-terminal S-1,2-diacyl-sn-glyceryl-L-cysteinyl-[lipoprotein] + a glycerophospholipid = N-acyl-S-1,2-diacyl-sn-glyceryl-L-cysteinyl-[lipoprotein] + a 2-acyl-sn-glycero-3-phospholipid + H(+). It participates in protein modification; lipoprotein biosynthesis (N-acyl transfer). In terms of biological role, catalyzes the phospholipid dependent N-acylation of the N-terminal cysteine of apolipoprotein, the last step in lipoprotein maturation. The chain is Apolipoprotein N-acyltransferase from Rhizobium leguminosarum bv. trifolii (strain WSM2304).